We begin with the raw amino-acid sequence, 555 residues long: Alpha-copaene synthase (555 aa).

Mg(2+) is bound by residues aspartate 312, aspartate 316, aspartate 452, serine 456, and glutamate 460. The short motif at 312 to 316 (DDTYD) is the DDXXD motif element.

This sequence belongs to the terpene synthase family. The cofactor is Mg(2+). As to expression, mainly expressed in sunflower trichomes.

It carries out the reaction (2E,6E)-farnesyl diphosphate = alpha-copaene + diphosphate. It catalyses the reaction (2E,6E)-farnesyl diphosphate = alpha-muurolene + diphosphate. The enzyme catalyses (2E,6E)-farnesyl diphosphate = alpha-humulene + diphosphate. Its pathway is secondary metabolite biosynthesis; terpenoid biosynthesis. In terms of biological role, involved in the biosynthesis of germacrene-derived sesquiterpene lactones. Catalyzes the cyclization of farnesyl diphosphate to alpha-copaene, delta-cadinene, alpha-muurolene, beta-caryophyllene and alpha-humulene. This chain is Alpha-copaene synthase (CS), found in Helianthus annuus (Common sunflower).